Here is a 231-residue protein sequence, read N- to C-terminus: Ferritin light chain (231 aa).

An N-terminal signal peptide occupies residues 1-19 (MKMLILAVSCLLAITGSLA). An intrachain disulfide couples Cys23 to Cys43. The region spanning 50–208 (YGSHGNVATE…GHTSDLKKFI (159 aa)) is the Ferritin-like diiron domain. Asn134 carries N-linked (GlcNAc...) asparagine glycosylation.

This sequence belongs to the ferritin family. As to quaternary structure, oligomer of 12 light (L) chains and 12 heavy (H) chains; L and H chains are disulfide-linked. The functional molecule forms a roughly spherical shell with a diameter of 12 nm and contains a central cavity into which the insoluble ferric iron core is deposited.

Its subcellular location is the golgi apparatus. It localises to the secreted. Its function is as follows. Stores iron in a soluble, non-toxic, readily available form. Important for iron homeostasis. Iron is taken up in the ferrous form and deposited as ferric hydroxides after oxidation. Ferritin is composed of a heavy (H) chain which is responsible for the oxidation and uptake of ferrous iron, and a light (L) chain which facilitates the nucleation of the ferrihydrite iron core. This Trichoplusia ni (Cabbage looper) protein is Ferritin light chain.